Here is a 498-residue protein sequence, read N- to C-terminus: ATP synthase subunit beta, chloroplastic (498 aa).

172 to 179 (GGAGVGKT) is an ATP binding site.

This sequence belongs to the ATPase alpha/beta chains family. In terms of assembly, F-type ATPases have 2 components, CF(1) - the catalytic core - and CF(0) - the membrane proton channel. CF(1) has five subunits: alpha(3), beta(3), gamma(1), delta(1), epsilon(1). CF(0) has four main subunits: a(1), b(1), b'(1) and c(9-12).

It is found in the plastid. It localises to the chloroplast thylakoid membrane. It catalyses the reaction ATP + H2O + 4 H(+)(in) = ADP + phosphate + 5 H(+)(out). In terms of biological role, produces ATP from ADP in the presence of a proton gradient across the membrane. The catalytic sites are hosted primarily by the beta subunits. The protein is ATP synthase subunit beta, chloroplastic of Beta vulgaris (Sugar beet).